Reading from the N-terminus, the 388-residue chain is Dual-specificity RNA methyltransferase RlmN (388 aa).

Glu-109 acts as the Proton acceptor in catalysis. Positions 115-354 (EDDRATLCVS…TIVRKTRGDD (240 aa)) constitute a Radical SAM core domain. Cys-122 and Cys-359 form a disulfide bridge. The [4Fe-4S] cluster site is built by Cys-129, Cys-133, and Cys-136. S-adenosyl-L-methionine contacts are provided by residues 183 to 184 (GE), Ser-215, 237 to 239 (SLH), and Asn-316. The active-site S-methylcysteine intermediate is Cys-359.

This sequence belongs to the radical SAM superfamily. RlmN family. The cofactor is [4Fe-4S] cluster.

The protein resides in the cytoplasm. It catalyses the reaction adenosine(2503) in 23S rRNA + 2 reduced [2Fe-2S]-[ferredoxin] + 2 S-adenosyl-L-methionine = 2-methyladenosine(2503) in 23S rRNA + 5'-deoxyadenosine + L-methionine + 2 oxidized [2Fe-2S]-[ferredoxin] + S-adenosyl-L-homocysteine. The enzyme catalyses adenosine(37) in tRNA + 2 reduced [2Fe-2S]-[ferredoxin] + 2 S-adenosyl-L-methionine = 2-methyladenosine(37) in tRNA + 5'-deoxyadenosine + L-methionine + 2 oxidized [2Fe-2S]-[ferredoxin] + S-adenosyl-L-homocysteine. Specifically methylates position 2 of adenine 2503 in 23S rRNA and position 2 of adenine 37 in tRNAs. m2A2503 modification seems to play a crucial role in the proofreading step occurring at the peptidyl transferase center and thus would serve to optimize ribosomal fidelity. The chain is Dual-specificity RNA methyltransferase RlmN from Citrobacter koseri (strain ATCC BAA-895 / CDC 4225-83 / SGSC4696).